We begin with the raw amino-acid sequence, 208 residues long: Methylthioribulose-1-phosphate dehydratase (208 aa).

Residues histidine 96 and histidine 98 each coordinate Zn(2+).

This sequence belongs to the aldolase class II family. MtnB subfamily. The cofactor is Zn(2+).

It carries out the reaction 5-(methylsulfanyl)-D-ribulose 1-phosphate = 5-methylsulfanyl-2,3-dioxopentyl phosphate + H2O. It functions in the pathway amino-acid biosynthesis; L-methionine biosynthesis via salvage pathway; L-methionine from S-methyl-5-thio-alpha-D-ribose 1-phosphate: step 2/6. Functionally, catalyzes the dehydration of methylthioribulose-1-phosphate (MTRu-1-P) into 2,3-diketo-5-methylthiopentyl-1-phosphate (DK-MTP-1-P). The polypeptide is Methylthioribulose-1-phosphate dehydratase (Pseudomonas fluorescens (strain Pf0-1)).